Here is a 130-residue protein sequence, read N- to C-terminus: Sigma-w pathway protein YsdB (130 aa).

Residues 2-22 traverse the membrane as a helical segment; the sequence is FVMVLRIILLALFAYCIYAVV.

It is found in the membrane. Functionally, may mediate a negative feedback loop that down-regulates the expression of the sigma-W regulon following the activation of sigma-W in response to conditions of cell envelope stress. Might interact with and inhibit the activity of the protease PrsW, or could bind to the anti-sigma-W factor RsiW and thereby protect it from PrsW-mediated cleavage. This chain is Sigma-w pathway protein YsdB (ysdB), found in Bacillus subtilis (strain 168).